A 651-amino-acid chain; its full sequence is Acetyl-coenzyme A synthetase (651 aa).

CoA is bound by residues 189 to 192 (RGGK), Thr-311, and Asn-335. Residues 387-389 (GEP), 411-416 (DTWWQT), Asp-500, and Arg-515 contribute to the ATP site. CoA is bound at residue Ser-523. Arg-526 is a binding site for ATP. Residues Val-537, His-539, and Val-542 each contribute to the Mg(2+) site. Arg-586 lines the CoA pocket. Lys-611 is modified (N6-acetyllysine).

Belongs to the ATP-dependent AMP-binding enzyme family. It depends on Mg(2+) as a cofactor. In terms of processing, acetylated. Deacetylation by the SIR2-homolog deacetylase activates the enzyme.

It catalyses the reaction acetate + ATP + CoA = acetyl-CoA + AMP + diphosphate. Its function is as follows. Catalyzes the conversion of acetate into acetyl-CoA (AcCoA), an essential intermediate at the junction of anabolic and catabolic pathways. AcsA undergoes a two-step reaction. In the first half reaction, AcsA combines acetate with ATP to form acetyl-adenylate (AcAMP) intermediate. In the second half reaction, it can then transfer the acetyl group from AcAMP to the sulfhydryl group of CoA, forming the product AcCoA. In Brucella suis (strain ATCC 23445 / NCTC 10510), this protein is Acetyl-coenzyme A synthetase.